Consider the following 155-residue polypeptide: Aspartate carbamoyltransferase regulatory chain (155 aa).

C110, C115, C139, and C142 together coordinate Zn(2+).

This sequence belongs to the PyrI family. In terms of assembly, contains catalytic and regulatory chains. Zn(2+) is required as a cofactor.

Its function is as follows. Involved in allosteric regulation of aspartate carbamoyltransferase. In Yersinia pestis bv. Antiqua (strain Antiqua), this protein is Aspartate carbamoyltransferase regulatory chain.